A 151-amino-acid polypeptide reads, in one-letter code: Major curlin subunit (151 aa).

An N-terminal signal peptide occupies residues 1–20; that stretch reads MKLLKVAAIAAIVFSGSALA. The tract at residues 71 to 90 is disordered; the sequence is TQHGGGNGADVGQGSDDSSI.

It belongs to the CsgA/CsgB family.

The protein resides in the fimbrium. Its function is as follows. Curlin is the structural subunit of the curli fimbriae. Curli are coiled surface structures that assemble preferentially at growth temperatures below 37 degrees Celsius. Curli can bind to fibronectin. This Escherichia coli (strain K12) protein is Major curlin subunit (csgA).